We begin with the raw amino-acid sequence, 219 residues long: Leucyl/phenylalanyl-tRNA--protein transferase (219 aa).

Belongs to the L/F-transferase family.

The protein localises to the cytoplasm. It catalyses the reaction N-terminal L-lysyl-[protein] + L-leucyl-tRNA(Leu) = N-terminal L-leucyl-L-lysyl-[protein] + tRNA(Leu) + H(+). The catalysed reaction is N-terminal L-arginyl-[protein] + L-leucyl-tRNA(Leu) = N-terminal L-leucyl-L-arginyl-[protein] + tRNA(Leu) + H(+). It carries out the reaction L-phenylalanyl-tRNA(Phe) + an N-terminal L-alpha-aminoacyl-[protein] = an N-terminal L-phenylalanyl-L-alpha-aminoacyl-[protein] + tRNA(Phe). In terms of biological role, functions in the N-end rule pathway of protein degradation where it conjugates Leu, Phe and, less efficiently, Met from aminoacyl-tRNAs to the N-termini of proteins containing an N-terminal arginine or lysine. The chain is Leucyl/phenylalanyl-tRNA--protein transferase from Leptospira interrogans serogroup Icterohaemorrhagiae serovar copenhageni (strain Fiocruz L1-130).